The following is a 222-amino-acid chain: ATP-dependent Clp protease proteolytic subunit (222 aa).

The active-site Nucleophile is S125. The active site involves H150.

The protein belongs to the peptidase S14 family. In terms of assembly, fourteen ClpP subunits assemble into 2 heptameric rings which stack back to back to give a disk-like structure with a central cavity, resembling the structure of eukaryotic proteasomes.

It is found in the cytoplasm. It catalyses the reaction Hydrolysis of proteins to small peptides in the presence of ATP and magnesium. alpha-casein is the usual test substrate. In the absence of ATP, only oligopeptides shorter than five residues are hydrolyzed (such as succinyl-Leu-Tyr-|-NHMec, and Leu-Tyr-Leu-|-Tyr-Trp, in which cleavage of the -Tyr-|-Leu- and -Tyr-|-Trp bonds also occurs).. Its function is as follows. Cleaves peptides in various proteins in a process that requires ATP hydrolysis. Has a chymotrypsin-like activity. Plays a major role in the degradation of misfolded proteins. The sequence is that of ATP-dependent Clp protease proteolytic subunit from Porphyromonas gingivalis (strain ATCC BAA-308 / W83).